Here is a 258-residue protein sequence, read N- to C-terminus: Glutamate racemase (258 aa).

Residues 11–12 and 43–44 each bind substrate; these read DS and YG. Cys74 functions as the Proton donor/acceptor in the catalytic mechanism. Residue 75–76 coordinates substrate; sequence NT. The active-site Proton donor/acceptor is Cys187. 188–189 contributes to the substrate binding site; it reads TH.

It belongs to the aspartate/glutamate racemases family.

It catalyses the reaction L-glutamate = D-glutamate. The protein operates within cell wall biogenesis; peptidoglycan biosynthesis. Provides the (R)-glutamate required for cell wall biosynthesis. This chain is Glutamate racemase, found in Bifidobacterium adolescentis (strain ATCC 15703 / DSM 20083 / NCTC 11814 / E194a).